We begin with the raw amino-acid sequence, 389 residues long: uncharacterized protein (389 aa).

This sequence belongs to the mimivirus L17x/L18x family.

This is an uncharacterized protein from Acanthamoeba polyphaga mimivirus (APMV).